Reading from the N-terminus, the 327-residue chain is uncharacterized protein (327 aa).

Residues 1–23 (MGGGRLPPLWLPLLIAWSEWGNC) form the signal peptide. N-linked (GlcNAc...) asparagine; by host glycosylation is found at N144 and N239. Residues 298–327 (EESEAAEETAAGEASAVAAAAVSEEEQRRE) form a disordered region. A compositionally biased stretch (low complexity) spans 305-319 (ETAAGEASAVAAAAV).

This is an uncharacterized protein from Human cytomegalovirus (strain AD169) (HHV-5).